Consider the following 216-residue polypeptide: Cell division protein SepF (216 aa).

The disordered stretch occupies residues 22-126 (EYVEEPDQAR…PVVDDGGPLA (105 aa)). Basic and acidic residues-rich tracts occupy residues 28 to 50 (DQAR…REFV), 62 to 80 (SRRD…RPRV), and 106 to 118 (ARAE…RAPV).

Belongs to the SepF family. In terms of assembly, homodimer. Interacts with FtsZ.

The protein resides in the cytoplasm. Functionally, cell division protein that is part of the divisome complex and is recruited early to the Z-ring. Probably stimulates Z-ring formation, perhaps through the cross-linking of FtsZ protofilaments. Its function overlaps with FtsA. This is Cell division protein SepF from Rhodococcus erythropolis (strain PR4 / NBRC 100887).